We begin with the raw amino-acid sequence, 417 residues long: Serine hydroxymethyltransferase (417 aa).

Residues leucine 121 and 125–127 (GHL) contribute to the (6S)-5,6,7,8-tetrahydrofolate site. N6-(pyridoxal phosphate)lysine is present on lysine 229. Position 354-356 (354-356 (SPF)) interacts with (6S)-5,6,7,8-tetrahydrofolate.

Belongs to the SHMT family. Homodimer. It depends on pyridoxal 5'-phosphate as a cofactor.

Its subcellular location is the cytoplasm. It catalyses the reaction (6R)-5,10-methylene-5,6,7,8-tetrahydrofolate + glycine + H2O = (6S)-5,6,7,8-tetrahydrofolate + L-serine. It participates in one-carbon metabolism; tetrahydrofolate interconversion. Its pathway is amino-acid biosynthesis; glycine biosynthesis; glycine from L-serine: step 1/1. Functionally, catalyzes the reversible interconversion of serine and glycine with tetrahydrofolate (THF) serving as the one-carbon carrier. This reaction serves as the major source of one-carbon groups required for the biosynthesis of purines, thymidylate, methionine, and other important biomolecules. Also exhibits THF-independent aldolase activity toward beta-hydroxyamino acids, producing glycine and aldehydes, via a retro-aldol mechanism. The polypeptide is Serine hydroxymethyltransferase (Stutzerimonas stutzeri (strain A1501) (Pseudomonas stutzeri)).